Here is a 342-residue protein sequence, read N- to C-terminus: S-adenosylmethionine:tRNA ribosyltransferase-isomerase (342 aa).

This sequence belongs to the QueA family. In terms of assembly, monomer.

It localises to the cytoplasm. The catalysed reaction is 7-aminomethyl-7-carbaguanosine(34) in tRNA + S-adenosyl-L-methionine = epoxyqueuosine(34) in tRNA + adenine + L-methionine + 2 H(+). Its pathway is tRNA modification; tRNA-queuosine biosynthesis. Functionally, transfers and isomerizes the ribose moiety from AdoMet to the 7-aminomethyl group of 7-deazaguanine (preQ1-tRNA) to give epoxyqueuosine (oQ-tRNA). The chain is S-adenosylmethionine:tRNA ribosyltransferase-isomerase from Geobacillus kaustophilus (strain HTA426).